We begin with the raw amino-acid sequence, 144 residues long: Gas vesicle protein A1 (144 aa).

The disordered stretch occupies residues 72–144; it reads EAGPRKDPGL…APSRRKEEQE (73 aa). The segment covering 113-127 has biased composition (basic and acidic residues); sequence KQARDDGGSERETSS.

It belongs to the gas vesicle GvpA family. The gas vesicle shell is 2 nm thick and consists of a single layer of this protein. It forms helical ribs nearly perpendicular to the long axis of the vesicle.

It is found in the gas vesicle shell. Its function is as follows. Gas vesicles are hollow, gas filled proteinaceous nanostructures found in some microorganisms. During planktonic growth they allow positioning of the organism at a favorable depth for light or nutrient acquisition. GvpA forms the protein shell. It is not clear what function GVs perform in soil bacteria. This chain is Gas vesicle protein A1, found in Streptomyces coelicolor (strain ATCC BAA-471 / A3(2) / M145).